Consider the following 301-residue polypeptide: LHMIHLHWYQYPPMNPMMYPLLLIFMFITGIPCLAGNFVTIWVFMTTKSLRSPANLLVVNLAMSDFLMMFTMFPPMMITCYYHTWTLGPTFCQVYAFLGNLFGCTSIWTMVFITFDRYNVIVKGVAGEPLSNKKAALWILSAWVLSFSWCSAPFFGWNRYVPEGNLTGCGTDYLSEDALSRSYLYVYSVWVYFLPLLITIYCYVFIIKAVAAHEKGMRDQAKKMGIKSLRNEEAQKTSAECRLAKIAMTTVALWFIAWTPYLLINWVGMFARSYLSPVYTIWGYVFAKANAVYNPIVYAIS.

The Extracellular segment spans residues 1-18; sequence LHMIHLHWYQYPPMNPMM. The helical transmembrane segment at 19-43 threads the bilayer; sequence YPLLLIFMFITGIPCLAGNFVTIWV. Residues 44-55 lie on the Cytoplasmic side of the membrane; sequence FMTTKSLRSPAN. A helical transmembrane segment spans residues 56-78; sequence LLVVNLAMSDFLMMFTMFPPMMI. At 79 to 92 the chain is on the extracellular side; the sequence is TCYYHTWTLGPTFC. A disulfide bond links C92 and C169. A helical transmembrane segment spans residues 93–115; sequence QVYAFLGNLFGCTSIWTMVFITF. A 'Ionic lock' involved in activated form stabilization motif is present at residues 116-118; it reads DRY. Residues 116 to 134 are Cytoplasmic-facing; the sequence is DRYNVIVKGVAGEPLSNKK. The chain crosses the membrane as a helical span at residues 135–155; it reads AALWILSAWVLSFSWCSAPFF. At 156–182 the chain is on the extracellular side; the sequence is GWNRYVPEGNLTGCGTDYLSEDALSRS. N-linked (GlcNAc...) asparagine glycosylation occurs at N165. The helical transmembrane segment at 183-204 threads the bilayer; sequence YLYVYSVWVYFLPLLITIYCYV. Over 205 to 245 the chain is Cytoplasmic; that stretch reads FIIKAVAAHEKGMRDQAKKMGIKSLRNEEAQKTSAECRLAK. The chain crosses the membrane as a helical span at residues 246–267; that stretch reads IAMTTVALWFIAWTPYLLINWV. The Extracellular portion of the chain corresponds to 268–278; the sequence is GMFARSYLSPV. The chain crosses the membrane as a helical span at residues 279-300; that stretch reads YTIWGYVFAKANAVYNPIVYAI. K288 is subject to N6-(retinylidene)lysine.

The protein belongs to the G-protein coupled receptor 1 family. Opsin subfamily. As to quaternary structure, homodimer. Interacts with GNAQ. Post-translationally, contains one covalently linked retinal chromophore.

It localises to the cell projection. Its subcellular location is the rhabdomere membrane. Its function is as follows. Photoreceptor required for image-forming vision at low light intensity. Can use both retinal and 3-dehydroretinal as visual pigment. Light-induced isomerization of 11-cis to all-trans retinal triggers a conformational change that activates signaling via G-proteins. Signaling via GNAQ probably mediates the activation of phospholipase C. This is Rhodopsin (RHO) from Cambarellus shufeldtii (Cajun dwarf crayfish).